Reading from the N-terminus, the 179-residue chain is Ubiquitin-conjugating enzyme E2 C (179 aa).

Residues 1-14 (MASQNRDPAATSVT) show a composition bias toward polar residues. Residues 1–31 (MASQNRDPAATSVTAARKGAEPSGGAARGPV) form a disordered region. A2 carries the post-translational modification N-acetylalanine. The residue at position 3 (S3) is a Phosphoserine. The UBC core domain occupies 30-175 (PVGKRLQQEL…LQETYSKQVT (146 aa)). The active-site Glycyl thioester intermediate is the C114.

It belongs to the ubiquitin-conjugating enzyme family. As to quaternary structure, component of the APC/C complex, composed of at least 14 distinct subunits that assemble into a complex of at least 19 chains with a combined molecular mass of around 1.2 MDa. Within this complex, directly interacts with ANAPC2. Autoubiquitinated by the APC/C complex, leading to its degradation by the proteasome. Its degradation plays a central role in APC/C regulation, allowing cyclin-A accumulation before S phase entry. APC/C substrates inhibit the autoubiquitination of UBE2C/UBCH10 but not its E2 function, hence APC/C remaining active until its substrates have been destroyed.

The catalysed reaction is S-ubiquitinyl-[E1 ubiquitin-activating enzyme]-L-cysteine + [E2 ubiquitin-conjugating enzyme]-L-cysteine = [E1 ubiquitin-activating enzyme]-L-cysteine + S-ubiquitinyl-[E2 ubiquitin-conjugating enzyme]-L-cysteine.. It catalyses the reaction S-ubiquitinyl-[E1 ubiquitin-activating enzyme]-L-cysteine + [acceptor protein]-L-lysine = [E1 ubiquitin-activating enzyme]-L-cysteine + N(6)-monoubiquitinyl-[acceptor protein]-L-lysine.. The protein operates within protein modification; protein ubiquitination. Functionally, accepts ubiquitin from the E1 complex and catalyzes its covalent attachment to other proteins. In vitro catalyzes 'Lys-11'- and 'Lys-48'-linked polyubiquitination. Acts as an essential factor of the anaphase promoting complex/cyclosome (APC/C), a cell cycle-regulated ubiquitin ligase that controls progression through mitosis. Acts by initiating 'Lys-11'-linked polyubiquitin chains on APC/C substrates, leading to the degradation of APC/C substrates by the proteasome and promoting mitotic exit. The polypeptide is Ubiquitin-conjugating enzyme E2 C (UBE2C) (Macaca fascicularis (Crab-eating macaque)).